A 206-amino-acid polypeptide reads, in one-letter code: Large ribosomal subunit protein uL4 (206 aa).

The interval 63 to 98 is disordered; that stretch reads MYRQKGTGRARHSSARAPQFRGGGKAHGPVPHSHAH. Positions 64–76 are enriched in basic residues; sequence YRQKGTGRARHSS.

It belongs to the universal ribosomal protein uL4 family. As to quaternary structure, part of the 50S ribosomal subunit.

Its function is as follows. One of the primary rRNA binding proteins, this protein initially binds near the 5'-end of the 23S rRNA. It is important during the early stages of 50S assembly. It makes multiple contacts with different domains of the 23S rRNA in the assembled 50S subunit and ribosome. Functionally, forms part of the polypeptide exit tunnel. This is Large ribosomal subunit protein uL4 from Chelativorans sp. (strain BNC1).